We begin with the raw amino-acid sequence, 571 residues long: Cerebral cavernous malformations 2 protein-like (571 aa).

3 disordered regions span residues 164-193 (AGVD…GTAE), 212-295 (AEAR…PQDP), and 544-571 (LAPD…DNYL). A compositionally biased stretch (basic and acidic residues) spans 184 to 193 (PEKRRVGTAE). The span at 212–223 (AEARAGGGGGGS) shows a compositional bias: gly residues. Over residues 237–251 (WERRQTFSGSWERRH) the composition is skewed to basic and acidic residues. Positions 253 to 264 (GGGGGGGAGKPG) are enriched in gly residues. Pro residues predominate over residues 286–295 (GPNPLDPQDP). Acidic residues predominate over residues 545-555 (APDDDDDDEDE).

The protein belongs to the CCM2 family.

This chain is Cerebral cavernous malformations 2 protein-like (CCM2L), found in Homo sapiens (Human).